A 1232-amino-acid chain; its full sequence is Anoctamin-8 (1232 aa).

Residues 1–32 are disordered; that stretch reads MAEAASGAGGTSLEGERGKRPPPEGEPAAPAS. Residue A2 is modified to N-acetylalanine. Over 2–244 the chain is Extracellular; the sequence is AEAASGAGGT…DDICDYFGVK (243 aa). Positions 14–23 are enriched in basic and acidic residues; the sequence is EGERGKRPPP. Residues 245–265 traverse the membrane as a helical segment; it reads IAMYFAWLGFYTSAMVYPAVF. Residues 266-281 lie on the Cytoplasmic side of the membrane; that stretch reads GSVLYTFTEADQTSRD. The chain crosses the membrane as a helical span at residues 282 to 302; it reads VSCVVFALFNVIWSTLFLEEW. Residues 303–356 lie on the Extracellular side of the membrane; it reads KRRGAELAYKWGTLDSPGEAVEEPRPQFRGVRRISPITRAEEFYYPPWKRLLFQ. S318 is subject to Phosphoserine. A helical transmembrane segment spans residues 357–377; sequence LLVSLPLCLACLVCVFLLMLG. The Cytoplasmic portion of the chain corresponds to 378–400; sequence CFQLQELVLSVKGLPRLARFLPK. The chain crosses the membrane as a helical span at residues 401 to 421; sequence VMLALLVSVSAEGYKKLAIWL. Over 422-437 the chain is Extracellular; sequence NDMENYRLESAYEKHL. A helical membrane pass occupies residues 438 to 458; it reads IIKVVLFQFVNSYLSLFYIGF. Residues 459–750 are Cytoplasmic-facing; that stretch reads YLKDMERLKE…YEDTFQDYQE (292 aa). Residues 524-650 form a disordered region; that stretch reads RRLEPQADEG…SPTMVEKGLE (127 aa). A compositionally biased stretch (gly residues) spans 532–551; it reads EGGGGGSGGGGRRCLSGGCG. The segment covering 582 to 606 has biased composition (acidic residues); that stretch reads EEDEDDEEEEDEEEEEDEEEGEEGG. S669 carries the post-translational modification Phosphoserine. Residues 681–728 are disordered; the sequence is RAGGEGRDQGPDGGPDPEPGSNSDSTRRQRRQNRSSWIDPPEEEHSPQ. Residues 751–771 form a helical membrane-spanning segment; sequence MFVQFGYVVLFSSAFPLAALC. The Extracellular segment spans residues 772–807; that stretch reads ALVNNLIEIRSDAFKLCTGLQRPFGQRVESIGQWQK. S801 carries the post-translational modification Phosphoserine; by FAM20C. Residues 808–828 traverse the membrane as a helical segment; the sequence is VMEAMGVLAIVVNCYLIGQCG. Residues 829 to 841 lie on the Cytoplasmic side of the membrane; sequence QLQRLFPWLSPEA. A helical transmembrane segment spans residues 842–862; sequence AIVSVVVLEHFALLLKYLIHV. The Extracellular portion of the chain corresponds to 863–1232; the sequence is AIPDIPGWVA…QAVCWPSGWH (370 aa). Disordered regions lie at residues 888–970, 997–1152, and 1174–1232; these read RHER…GSLL, LAAA…WQWD, and PPCA…SGWH. The span at 904-932 shows a compositional bias: basic and acidic residues; that stretch reads RREEEERQRHAEHHARREHDSGGREEARA. 2 stretches are compositionally biased toward low complexity: residues 933 to 953 and 997 to 1006; these read EGSG…AKGS and LAAAGAGATT. Position 1020 is an asymmetric dimethylarginine; alternate (R1020). At R1020 the chain carries Omega-N-methylarginine; alternate. Positions 1031–1043 are enriched in basic and acidic residues; it reads KSPETRRDSERSH. Residues 1078 to 1087 show a composition bias toward polar residues; it reads TPSSGSSRVQ. Composition is skewed to pro residues over residues 1130–1145 and 1197–1221; these read PAPP…PTPP and LPPP…PSPS.

It belongs to the anoctamin family. Expressed in embryonic stem cells, fetal brain and neural tissues.

The protein localises to the cell membrane. Functionally, does not exhibit calcium-activated chloride channel (CaCC) activity. This is Anoctamin-8 (ANO8) from Homo sapiens (Human).